The following is a 270-amino-acid chain: Phosphonates import ATP-binding protein PhnC (270 aa).

One can recognise an ABC transporter domain in the interval 2-245; it reads LVIEGLTCRF…IARELYDLEA (244 aa). Residue 34 to 41 coordinates ATP; it reads GRSGAGKS.

This sequence belongs to the ABC transporter superfamily. Phosphonates importer (TC 3.A.1.9.1) family. As to quaternary structure, the complex is composed of two ATP-binding proteins (PhnC), two transmembrane proteins (PhnE) and a solute-binding protein (PhnD).

It is found in the cell inner membrane. It carries out the reaction phosphonate(out) + ATP + H2O = phosphonate(in) + ADP + phosphate + H(+). Functionally, part of the ABC transporter complex PhnCDE involved in phosphonates import. Responsible for energy coupling to the transport system. This is Phosphonates import ATP-binding protein PhnC from Rhodopseudomonas palustris (strain BisB5).